The following is a 260-amino-acid chain: Adenosylcobinamide-GDP ribazoletransferase (260 aa).

7 consecutive transmembrane segments (helical) span residues 42–62, 64–84, 117–137, 144–164, 192–212, 214–234, and 240–260; these read PLAG…ANAI, LPPL…TGAL, FAAL…MAII, YALL…LAFW, GLGL…VALI, ALVL…AKIG, and TLGA…VMAL.

It belongs to the CobS family. Requires Mg(2+) as cofactor.

It localises to the cell inner membrane. It carries out the reaction alpha-ribazole + adenosylcob(III)inamide-GDP = adenosylcob(III)alamin + GMP + H(+). It catalyses the reaction alpha-ribazole 5'-phosphate + adenosylcob(III)inamide-GDP = adenosylcob(III)alamin 5'-phosphate + GMP + H(+). Its pathway is cofactor biosynthesis; adenosylcobalamin biosynthesis; adenosylcobalamin from cob(II)yrinate a,c-diamide: step 7/7. Joins adenosylcobinamide-GDP and alpha-ribazole to generate adenosylcobalamin (Ado-cobalamin). Also synthesizes adenosylcobalamin 5'-phosphate from adenosylcobinamide-GDP and alpha-ribazole 5'-phosphate. The chain is Adenosylcobinamide-GDP ribazoletransferase from Brucella melitensis biotype 1 (strain ATCC 23456 / CCUG 17765 / NCTC 10094 / 16M).